The chain runs to 242 residues: Triosephosphate isomerase (242 aa).

Residue 9-11 participates in substrate binding; that stretch reads NWK. Catalysis depends on His99, which acts as the Electrophile. The Proton acceptor role is filled by Glu169. Substrate contacts are provided by residues Gly175, Ser207, and 228 to 229; that span reads GG.

Belongs to the triosephosphate isomerase family. As to quaternary structure, homodimer.

Its subcellular location is the cytoplasm. The catalysed reaction is D-glyceraldehyde 3-phosphate = dihydroxyacetone phosphate. It functions in the pathway carbohydrate biosynthesis; gluconeogenesis. The protein operates within carbohydrate degradation; glycolysis; D-glyceraldehyde 3-phosphate from glycerone phosphate: step 1/1. Its function is as follows. Involved in the gluconeogenesis. Catalyzes stereospecifically the conversion of dihydroxyacetone phosphate (DHAP) to D-glyceraldehyde-3-phosphate (G3P). This is Triosephosphate isomerase from Mycoplasma mobile (strain ATCC 43663 / 163K / NCTC 11711) (Mesomycoplasma mobile).